The primary structure comprises 113 residues: MNQFYVHVRLFEDTAEQTKKFEELMLNFLYQKTVKESDDSCCRLIPEGYILKSTMNCQQILDQTFSIANSAGVDANIFVCKFEQSACLLPSASLVGNDFVHYDLTPKPIKLDS.

This is an uncharacterized protein from Escherichia coli (strain K12).